Reading from the N-terminus, the 341-residue chain is General L-amino acid-binding periplasmic protein AapJ (341 aa).

The N-terminal stretch at 1-23 is a signal peptide; the sequence is MKNKLLSAAIGAAVLAVGASAAS.

It belongs to the bacterial solute-binding protein 3 family. In terms of assembly, the complex is composed of two ATP-binding proteins (AapP), two transmembrane proteins (AapM and AapQ) and a solute-binding protein (AapJ).

The protein localises to the periplasm. Part of the ABC transporter complex AapJQMP involved in uptake of L-amino acids. Affects the efflux of these amino acids as well. Essential for the development of bacteroids, the differentiated legume-symbiotic forms of this bacterium, and for the effective N(2) fixation by them. This chain is General L-amino acid-binding periplasmic protein AapJ (aapJ), found in Rhizobium johnstonii (strain DSM 114642 / LMG 32736 / 3841) (Rhizobium leguminosarum bv. viciae).